Consider the following 539-residue polypeptide: Diacylglycerol O-acyltransferase 1 (539 aa).

Residues 1-104 form a disordered region; it reads MAISDMPEST…NDGGEKIANG (104 aa). Polar residues predominate over residues 33-52; the sequence is TETTEVSDSNSKTTDPDSGN. A compositionally biased stretch (basic and acidic residues) spans 56 to 80; sequence ESVRVRDSSTDESLARKSCEDDGSR. 7 helical membrane-spanning segments follow: residues 143–163, 187–207, 219–239, 244–264, 294–314, 334–354, and 383–403; these read HAGL…RLII, WPLL…FVVE, VVLL…VFVI, SVVL…LKLV, YPYS…TLCY, VKLI…INPI, and VWLC…AELL. Positions 410–416 match the FYXDWWN motif motif; it reads FYKDWWN. The next 3 helical transmembrane spans lie at 451 to 471, 473 to 493, and 506 to 526; these read GVAI…CIAV, CHIF…LVLI, and VGNM…CVLL. Histidine 465 is a catalytic residue.

The protein belongs to the membrane-bound acyltransferase family. Sterol o-acyltransferase subfamily.

The protein resides in the endoplasmic reticulum membrane. It carries out the reaction an acyl-CoA + a 1,2-diacyl-sn-glycerol = a triacyl-sn-glycerol + CoA. It participates in glycerolipid metabolism; triacylglycerol biosynthesis. Major contributor to triacylglycerol (TAG) synthesis and oil accumulation in developing seeds. Catalyzes the acylation of the sn-3 hydroxy group of sn-1,2-diacylglycerol using acyl-CoA. Has a marked preference for oleoyl-CoA as substrate. This is Diacylglycerol O-acyltransferase 1 from Corylus americana (American hazelnut).